Consider the following 603-residue polypeptide: Sulfoacetaldehyde acetyltransferase (603 aa).

This sequence belongs to the TPP enzyme family. Homodimer or homotetramer. Mg(2+) serves as cofactor. The cofactor is thiamine diphosphate.

The protein resides in the cytoplasm. It catalyses the reaction acetyl phosphate + sulfite + H(+) = sulfoacetaldehyde + phosphate. It participates in organosulfur degradation; taurine degradation via aerobic pathway; acetyl phosphate and sulfite from taurine: step 2/2. The protein is Sulfoacetaldehyde acetyltransferase (xsc) of Alcaligenes xylosoxydans xylosoxydans (Achromobacter xylosoxidans).